The sequence spans 137 residues: Phosphoinositide-interacting protein (137 aa).

2 consecutive transmembrane segments (helical) span residues 56–76 and 94–114; these read IVIM…TCLA and PGFL…VPII.

As to quaternary structure, interacts with TRPV1.

The protein localises to the membrane. Its function is as follows. Regulatory subunit of TRPV1, a molecular sensor of noxious heat and capsaicin. Positively regulates TRPV1 channel activity via phosphatidylinositol 4,5-bisphosphate (PIP2). Binds various phosphoinositide, including phosphatidylinositol 4,5-bisphosphate (PIP2), but not phosphatidylinositol (PI). This chain is Phosphoinositide-interacting protein (PIRT), found in Homo sapiens (Human).